The chain runs to 192 residues: Der GTPase-activating protein YihI (192 aa).

Residues 1-12 show a composition bias toward basic residues; sequence MSAKQPNRKPAG. 2 disordered regions span residues 1 to 87 and 145 to 192; these read MSAK…IKEK and DTDD…PKKK. Basic and acidic residues predominate over residues 13-26; sequence KRKESDASAQEGRE. A compositionally biased stretch (basic residues) spans 27–36; the sequence is RKRAAKRKGL. The span at 145–172 shows a compositional bias: acidic residues; the sequence is DTDDDEDEADFDEADFDEPGQPASEEEL. A compositionally biased stretch (basic and acidic residues) spans 183–192; sequence PEPKPEPKKK.

The protein belongs to the YihI family. In terms of assembly, interacts with Der.

In terms of biological role, a GTPase-activating protein (GAP) that modifies Der/EngA GTPase function. May play a role in ribosome biogenesis. The sequence is that of Der GTPase-activating protein YihI from Aeromonas hydrophila subsp. hydrophila (strain ATCC 7966 / DSM 30187 / BCRC 13018 / CCUG 14551 / JCM 1027 / KCTC 2358 / NCIMB 9240 / NCTC 8049).